Consider the following 152-residue polypeptide: Aminoglycoside N(6')-acetyltransferase type 1 (152 aa).

Positions 5-152 (PLVRPVETTD…AQVRCFRKPL (148 aa)) constitute an N-acetyltransferase domain. Substrate is bound by residues tryptophan 26, tyrosine 73, glutamate 86, and aspartate 122. Position 127 (asparagine 127) interacts with acetyl-CoA.

Homodimer.

It catalyses the reaction kanamycin B + acetyl-CoA = N(6')-acetylkanamycin B + CoA + H(+). Its function is as follows. Catalyzes the transfer of an acetyl group from acetyl-CoA to the 6'-amino group of aminoglycoside molecules conferring resistance to antibiotics containing the purpurosamine ring including amikacin. This Klebsiella aerogenes (Enterobacter aerogenes) protein is Aminoglycoside N(6')-acetyltransferase type 1 (aacA7).